We begin with the raw amino-acid sequence, 249 residues long: BPI fold-containing family A member 1 (249 aa).

The N-terminal stretch at 1–15 (MFQVAGLIVFCGLLA) is a signal peptide. The important for surfactant activity and antibacterial properties stretch occupies residues 81 to 86 (LLGGLL). An N-linked (GlcNAc...) asparagine glycan is attached at N151. Residues C173 and C217 are joined by a disulfide bond.

It belongs to the BPI/LBP/Plunc superfamily. Plunc family. In terms of assembly, monomer. Interacts (via N-terminus) with SCNN1B, a subunit of the heterotrimeric epithelial sodium channel (ENaC); this inhibits proteolytic activation of ENaC. As to expression, expressed in lung and trachea.

Its subcellular location is the secreted. Functionally, lipid-binding protein which shows high specificity for the surfactant phospholipid dipalmitoylphosphatidylcholine (DPPC). Plays a role in the innate immune responses of the upper airways. Reduces the surface tension in secretions from airway epithelia and inhibits the formation of biofilm by pathogenic Gram-negative bacteria, such as P.aeruginosa and K.pneumoniae. Negatively regulates proteolytic cleavage of SCNN1G, an event that is required for activation of the epithelial sodium channel (ENaC), and thereby contributes to airway surface liquid homeostasis and proper clearance of mucus. Plays a role in the airway inflammatory response after exposure to irritants. May attract macrophages and neutrophils. This Sus scrofa (Pig) protein is BPI fold-containing family A member 1 (BPIFA1).